A 282-amino-acid chain; its full sequence is 2,3,4,5-tetrahydropyridine-2,6-dicarboxylate N-succinyltransferase (282 aa).

Positions 109 and 146 each coordinate substrate.

This sequence belongs to the transferase hexapeptide repeat family. Homotrimer.

The protein resides in the cytoplasm. It catalyses the reaction (S)-2,3,4,5-tetrahydrodipicolinate + succinyl-CoA + H2O = (S)-2-succinylamino-6-oxoheptanedioate + CoA. Its pathway is amino-acid biosynthesis; L-lysine biosynthesis via DAP pathway; LL-2,6-diaminopimelate from (S)-tetrahydrodipicolinate (succinylase route): step 1/3. The sequence is that of 2,3,4,5-tetrahydropyridine-2,6-dicarboxylate N-succinyltransferase from Bartonella bacilliformis (strain ATCC 35685 / KC583 / Herrer 020/F12,63).